The sequence spans 445 residues: CBL-interacting protein kinase 3 (445 aa).

A Protein kinase domain is found at 19–274; it reads YELGRAIGQG…TSQVLQDQWF (256 aa). ATP contacts are provided by residues 25–33 and Lys-48; that span reads IGQGTFAKV. The active-site Proton acceptor is the Asp-142. The tract at residues 160 to 189 is activation loop; that stretch reads DFGLSAISEQVKADGLLHTTCGTPNYVAPE. Residues 309-336 enclose the NAF domain; the sequence is AMEEQPTLMNAFELISLNKGLNLDNFFE. The interval 342–371 is PPI; the sequence is KRETRFTSQCPPKEIINRIEEAANLLGFNI.

The protein belongs to the protein kinase superfamily. CAMK Ser/Thr protein kinase family. SNF1 subfamily. Mn(2+) serves as cofactor.

The catalysed reaction is L-seryl-[protein] + ATP = O-phospho-L-seryl-[protein] + ADP + H(+). It catalyses the reaction L-threonyl-[protein] + ATP = O-phospho-L-threonyl-[protein] + ADP + H(+). In terms of biological role, CIPK serine-threonine protein kinases interact with CBL proteins. Binding of a CBL protein to the regulatory NAF domain of CIPK protein lead to the activation of the kinase in a calcium-dependent manner. The protein is CBL-interacting protein kinase 3 (CIPK3) of Oryza sativa subsp. japonica (Rice).